The following is a 1411-amino-acid chain: DNA-directed RNA polymerase subunit beta' (1411 aa).

Positions 70, 72, 85, and 88 each coordinate Zn(2+). Mg(2+) is bound by residues Asp-458, Asp-460, and Asp-462. Zn(2+) contacts are provided by Cys-813, Cys-887, Cys-894, and Cys-897. The disordered stretch occupies residues 1384 to 1411; the sequence is AEAAEMATTGSDEAPEVEGSGVESGSAE.

Belongs to the RNA polymerase beta' chain family. The RNAP catalytic core consists of 2 alpha, 1 beta, 1 beta' and 1 omega subunit. When a sigma factor is associated with the core the holoenzyme is formed, which can initiate transcription. Mg(2+) serves as cofactor. It depends on Zn(2+) as a cofactor.

It carries out the reaction RNA(n) + a ribonucleoside 5'-triphosphate = RNA(n+1) + diphosphate. Functionally, DNA-dependent RNA polymerase catalyzes the transcription of DNA into RNA using the four ribonucleoside triphosphates as substrates. This Paracidovorax citrulli (strain AAC00-1) (Acidovorax citrulli) protein is DNA-directed RNA polymerase subunit beta'.